We begin with the raw amino-acid sequence, 198 residues long: ATP-dependent Clp protease proteolytic subunit (198 aa).

The active-site Nucleophile is Ser-98. Residue His-123 is part of the active site.

The protein belongs to the peptidase S14 family. Fourteen ClpP subunits assemble into 2 heptameric rings which stack back to back to give a disk-like structure with a central cavity, resembling the structure of eukaryotic proteasomes.

The protein localises to the cytoplasm. It carries out the reaction Hydrolysis of proteins to small peptides in the presence of ATP and magnesium. alpha-casein is the usual test substrate. In the absence of ATP, only oligopeptides shorter than five residues are hydrolyzed (such as succinyl-Leu-Tyr-|-NHMec, and Leu-Tyr-Leu-|-Tyr-Trp, in which cleavage of the -Tyr-|-Leu- and -Tyr-|-Trp bonds also occurs).. In terms of biological role, cleaves peptides in various proteins in a process that requires ATP hydrolysis. Has a chymotrypsin-like activity. Plays a major role in the degradation of misfolded proteins. This chain is ATP-dependent Clp protease proteolytic subunit, found in Bacillus pumilus (strain SAFR-032).